Here is a 468-residue protein sequence, read N- to C-terminus: Tapasin-related protein (468 aa).

A signal peptide spans 1 to 18 (MGTQEGWCLLLCLALSGA). At 19 to 405 (AETKPHPAER…STQVVPPERR (387 aa)) the chain is on the lumenal side. The Ig-like V-type domain maps to 181-297 (PQGTVRTAVE…SLYRAQQIIQ (117 aa)). Cystine bridges form between cysteine 212-cysteine 283 and cysteine 321-cysteine 382. Asparagine 265 carries N-linked (GlcNAc...) asparagine glycosylation. Residues 304–394 (PKVRLSLANE…MHISLEEPLG (91 aa)) enclose the Ig-like C1-type domain. A helical transmembrane segment spans residues 406-426 (TALGVIFASSLFLLALLFLGL). The Cytoplasmic portion of the chain corresponds to 427–468 (QRRQAPTRVGLLQAERWKTTSCADTQSSHLHEDRTACVSQPS).

As to quaternary structure, interacts with peptide-free HLA-A*02-B2M complexes or those loaded with low affinity peptides, likely facilitating peptide exchange onto higher affinity peptides. Interacts with MR1 in a ligand-independent way; this interaction may stabilize MR1 pool and facilitate ligand loading and dissociation.

The protein resides in the cell membrane. Its subcellular location is the endoplasmic reticulum membrane. It is found in the microsome membrane. The protein localises to the golgi apparatus membrane. Component of the antigen processing and presentation pathway, which binds to MHC class I coupled with beta2-microglobulin/B2M. Association between TAPBPR and MHC class I occurs in the absence of a functional peptide-loading complex (PLC). Expression seems to slow down and down-regulate MHC class I surface expression. In Pongo abelii (Sumatran orangutan), this protein is Tapasin-related protein (TAPBPL).